We begin with the raw amino-acid sequence, 464 residues long: Methionine aminopeptidase 2 (464 aa).

The interval 1–86 (MGSKTPGNHR…RKKKKKNTKE (86 aa)) is disordered. Acidic residues predominate over residues 43–54 (GESEGGEDEDDD). Residues 72 to 83 (KRNKRRKKKKKN) show a composition bias toward basic residues. A substrate-binding site is contributed by His-216. Asp-237, Asp-248, and His-317 together coordinate a divalent metal cation. Residue His-325 coordinates substrate. 2 residues coordinate a divalent metal cation: Glu-350 and Glu-445.

The protein belongs to the peptidase M24A family. Methionine aminopeptidase eukaryotic type 2 subfamily. The cofactor is Co(2+). Zn(2+) serves as cofactor. Requires Mn(2+) as cofactor. It depends on Fe(2+) as a cofactor.

It is found in the cytoplasm. It carries out the reaction Release of N-terminal amino acids, preferentially methionine, from peptides and arylamides.. Its function is as follows. Cotranslationally removes the N-terminal methionine from nascent proteins. The N-terminal methionine is often cleaved when the second residue in the primary sequence is small and uncharged (Met-Ala-, Cys, Gly, Pro, Ser, Thr, or Val). The polypeptide is Methionine aminopeptidase 2 (Ajellomyces capsulatus (strain NAm1 / WU24) (Darling's disease fungus)).